Consider the following 1200-residue polypeptide: Nuclear pore complex protein Nup133 (1200 aa).

Residues 1–28 (MERNLQKQLYGISRESSPGARRYSMPAA) are disordered.

Belongs to the nucleoporin Nup133 family. As to quaternary structure, forms part of the Nup107-Nup160 subcomplex in the nuclear pore.

The protein resides in the nucleus. The protein localises to the nuclear pore complex. In terms of biological role, probable component of the nuclear pore complex (NPC). Plays a role in NPC assembly and/or maintenance. The chain is Nuclear pore complex protein Nup133 from Drosophila melanogaster (Fruit fly).